The primary structure comprises 669 residues: GEPGGVGPIGPPGERGAPGNRXXXXXXXXXXXXXXXXXXXXXXXXXXXXXXXXXXXXXXXXXXXXXXXXXXXXXXXXXXXXXXXXXXXXXXXXXXXXXXXXXXXXXXXXXXXXXXXXXXXXXXXXXXXXXXXXXXXXXXXXXXXXXXXXXXXXXXXXXXXXXXXXXXXXXXXXXXXXXXXXXXXXXXXXXXXXXXXXXXXXXXXXXXXXXXXXXXXXXXXXXXXXXXXXXXXXXXXXXXXXXXXXXXXXXXXXXXXXXXXXXXXXXXXXXXXXXXXXXXXXXXXXXXXXXXXXXXXXXXXXXXXXXXXXXXXXXXXXXXXXXXXGAPGERGETGPPGPAGFAGPPGADGQPGAKXXXXXXXXXXXXXXXXXXXXXXXXXXXXXXXXXXXXXXXXXXXXXXXXXXXXXXXXVGPPGANGNPGPAGPPGPAGKXXXXXXXXXXXXXXXXXXXXXXXXXXXXXXXXXXXXXXXXXXXXXXXXXXXXXXXXXXXXXXXXXXXXXXXXXXXXXXXXXXXXXXXXXXXXXXXXXXXXXXXXXXXXXXXXXXXXXXXXXXXXXXXXXXXXXXXXXXXXXXXXXXXXXXXXXXXXXXXXXXXXXXXXXXXXXXXXXXXXXXXXXXXXXXXXXXXXXXXXXXXXXXXXGFTGLQGLPGPPGTSGDQGASGPSGPAGPR.

4-hydroxyproline occurs at positions 3 and 12. The segment covering 318–327 has biased composition (low complexity); the sequence is XXXXXXXGAP. 3 disordered regions span residues 318 to 360, 405 to 438, and 638 to 669; these read XXXX…XXXX and XXGF…AGPR. 4-hydroxyproline is present on residues Pro-336 and Pro-345. Composition is skewed to low complexity over residues 339 to 360 and 405 to 420; these read AGFA…XXXX and XXXX…NGNP. A 3-hydroxyproline modification is found at Pro-413. 4-hydroxyproline occurs at positions 414, 420, and 426. Composition is skewed to low complexity over residues 429-438 and 638-647; these read AGKXXXXXXX and XXGFTGLQGL. Residue Pro-648 is modified to 4-hydroxyproline. Pro-650 carries the 3-hydroxyproline modification.

It belongs to the fibrillar collagen family. Homotrimers of alpha 1(II) chains. Post-translationally, contains mostly 4-hydroxyproline. Prolines at the third position of the tripeptide repeating unit (G-X-P) are 4-hydroxylated in some or all of the chains. In terms of processing, contains 3-hydroxyproline at a few sites. This modification occurs on the first proline residue in the sequence motif Gly-Pro-Hyp, where Hyp is 4-hydroxyproline.

The protein resides in the secreted. Its subcellular location is the extracellular space. It localises to the extracellular matrix. In terms of biological role, type II collagen is specific for cartilaginous tissues. It is essential for the normal embryonic development of the skeleton, for linear growth and for the ability of cartilage to resist compressive forces. This chain is Collagen alpha-1(II) chain, found in Mammut americanum (American mastodon).